The sequence spans 456 residues: MDVKTLKGFKDYLPKDSLIRIHIVKQIFSVLNSYNFDLIDTPVLEYSELLLKKSGDESEKQIYRFKDHGGRDVSMRFDLTIPFARFVATNISDLKFPFRRSQFGKVFRGENSQKGRYREFMQFDFDIVGEDGFRADAEILSVVYYGLEEIFLNFIEGINKKFIIHYSHLGILNSFFEKLGIKEESIFILRNIDKIDKIGIDKVKEALLLKIEKEAVDSILSLVNLQGAFKDKIQALKSILGDNESVKRVEDVYRHLSLLKIQDSFNLNLKISGGLDYYTGIVFESEVFGSNMGSVCSGGRYDNLVSSYSSSIQKVSGVGGSFGVDRIKDIIDLEQFSYIKIFVTKARSKVLIVNLDSALQNYYYELATRFRNHDYSKVKNISCEVYFKNKNGKNIKEQIEYALNKEIRFLVFVGQEEYKENKIKVRDLTKKEELLLSFEEVINVIKCNEKLLCTPF.

It belongs to the class-II aminoacyl-tRNA synthetase family. As to quaternary structure, homodimer.

Its subcellular location is the cytoplasm. It carries out the reaction tRNA(His) + L-histidine + ATP = L-histidyl-tRNA(His) + AMP + diphosphate + H(+). The sequence is that of Histidine--tRNA ligase from Borrelia garinii subsp. bavariensis (strain ATCC BAA-2496 / DSM 23469 / PBi) (Borreliella bavariensis).